The chain runs to 595 residues: Inactive serine/threonine-protein kinase PLK5 (595 aa).

Positions tyrosine 27–phenylalanine 279 constitute a Protein kinase domain. ATP-binding positions include isoleucine 33–cysteine 41 and lysine 56. Residue aspartate 150 is the Proton acceptor of the active site. The segment at phenylalanine 326–glutamate 350 is disordered. Residues glutamate 340–glutamate 350 are compositionally biased toward basic and acidic residues. 2 POLO box domains span residues tryptophan 413–arginine 491 and aspartate 509–valine 595.

Belongs to the protein kinase superfamily. Ser/Thr protein kinase family. CDC5/Polo subfamily. Expressed in the cerebellum, eye and brain cortex (at protein level). Expressed in highly differentiated tissues, such as brain, eyes and ovary. Not detectable in proliferating tissues, such as the colon, spleen and placenta.

Its subcellular location is the nucleus. It localises to the nucleolus. The protein resides in the cytoplasm. Its function is as follows. Inactive serine/threonine-protein kinase that plays a role in cell cycle progression and neuronal differentiation. The protein is Inactive serine/threonine-protein kinase PLK5 of Mus musculus (Mouse).